Reading from the N-terminus, the 488-residue chain is Tyrosine-protein kinase Srms (488 aa).

Residues 51–112 (PFPQLFLALY…PITHVAKASP (62 aa)) form the SH3 domain. In terms of domain architecture, SH2 spans 120 to 212 (WYFSGVSRTQ…LIQNPLLQPC (93 aa)). Positions 230–488 (FALGRKLGEG…KLHAIHRCHP (259 aa)) constitute a Protein kinase domain. ATP is bound by residues 236–244 (LGEGYFGEV) and lysine 258. The Proton acceptor role is filled by aspartate 350. Tyrosine 380 carries the post-translational modification Phosphotyrosine; by autocatalysis.

It belongs to the protein kinase superfamily. Tyr protein kinase family. SRC subfamily. Interacts (via the SH2 and SH3 domains) with DOK1. Interacts with KHDRBS1/SAM68 and VIM. Highly expressed in most breast cancers (at protein level).

The protein resides in the cytoplasm. It carries out the reaction L-tyrosyl-[protein] + ATP = O-phospho-L-tyrosyl-[protein] + ADP + H(+). Functionally, non-receptor tyrosine-protein kinase which phosphorylates DOK1 on tyrosine residues. Also phosphorylates KHDRBS1/SAM68 and VIM on tyrosine residues. Phosphorylation of KHDRBS1 is EGF-dependent. Phosphorylates OTUB1, promoting deubiquitination of RPTOR. The polypeptide is Tyrosine-protein kinase Srms (SRMS) (Homo sapiens (Human)).